Consider the following 1125-residue polypeptide: RGS domain-containing serine/threonine-protein kinase A (1125 aa).

Disordered regions lie at residues 1-77 (MKTS…GGNK), 96-191 (RRNS…IVDD), 276-416 (GISP…NNTN), and 455-480 (YVGG…PAPE). Low complexity-rich tracts occupy residues 7–30 (SSNS…NNNN) and 37–66 (SSKS…LSSG). Residues 121 to 136 (LDSKPPKPFDEKDDPI) are compositionally biased toward basic and acidic residues. 2 stretches are compositionally biased toward low complexity: residues 159 to 191 (QPQQ…IVDD) and 281 to 342 (NNNN…LNNS). Positions 343–361 (PRYLNSSSSPRSMQHLSSK) are enriched in polar residues. Low complexity predominate over residues 362–416 (ITTTTTTTTTTTTTTSDDNNGNTNNNISNNNNIINNSNNNSNSNNNNNNNINNTN). One can recognise an RGS domain in the interval 487 to 603 (KFIETITDPT…ISSPFNPEWK (117 aa)). Over residues 617 to 685 (TTTQPINNFN…NNSNGSNTSS (69 aa)) the composition is skewed to low complexity. Disordered stretches follow at residues 617 to 710 (TTTQ…KERS) and 723 to 762 (NLSN…SNNN). The segment covering 690-710 (ERLDNIKGNRERVDSNGKERS) has biased composition (basic and acidic residues). The segment covering 723–735 (NLSNHSNSSSNSN) has biased composition (low complexity). A compositionally biased stretch (basic and acidic residues) spans 736–748 (GKDKDKDKDKNEN). Residues 749–762 (TTDNSNNNNNSNNN) are compositionally biased toward low complexity. Residues 842–1097 (VSIHKWIASG…YLESIIYPSV (256 aa)) form the Protein kinase domain. Residues 848–856 (IASGSSGRV) and Lys-869 each bind ATP. Asp-963 functions as the Proton acceptor in the catalytic mechanism.

Belongs to the protein kinase superfamily. TKL Ser/Thr protein kinase family. Post-translationally, autophosphorylated.

It is found in the cytoplasm. The protein resides in the cell membrane. It carries out the reaction L-seryl-[protein] + ATP = O-phospho-L-seryl-[protein] + ADP + H(+). It catalyses the reaction L-threonyl-[protein] + ATP = O-phospho-L-threonyl-[protein] + ADP + H(+). Up-regulated by cAMP. In terms of biological role, serine/threonine kinase involved in negative regulation of chemotaxis. The sequence is that of RGS domain-containing serine/threonine-protein kinase A (rckA) from Dictyostelium discoideum (Social amoeba).